Consider the following 146-residue polypeptide: Large ribosomal subunit protein uL15x (146 aa).

Composition is skewed to basic residues over residues 1–14 (MTTR…KRGH) and 21–30 (RIGKHRKHPG). A disordered region spans residues 1–35 (MTTRFKKNRKKRGHVSAGHGRIGKHRKHPGGRGNA).

The protein belongs to the universal ribosomal protein uL15 family.

The sequence is that of Large ribosomal subunit protein uL15x (RPL27AC) from Arabidopsis thaliana (Mouse-ear cress).